Reading from the N-terminus, the 203-residue chain is Chaperonin-like RbcX protein 2, chloroplastic (203 aa).

The transit peptide at 1–78 (MVSAWFVVGS…RKSKKLLIVN (78 aa)) directs the protein to the chloroplast.

The protein belongs to the RbcX family. As to quaternary structure, homodimer. Interacts with rbcL, atpB and RBCS-1B.

The protein resides in the plastid. It localises to the chloroplast stroma. Functionally, chaperone involved in RuBisCO assembly process. In Arabidopsis thaliana (Mouse-ear cress), this protein is Chaperonin-like RbcX protein 2, chloroplastic.